Here is a 638-residue protein sequence, read N- to C-terminus: Threonine--tRNA ligase (638 aa).

The TGS domain maps to 1–61 (MVAITLPDGK…DRDVNLSIIT (61 aa)). The tract at residues 244–536 (DHRRLGREME…LIENFAGRFP (293 aa)) is catalytic. Residues cysteine 336, histidine 387, and histidine 513 each coordinate Zn(2+).

Belongs to the class-II aminoacyl-tRNA synthetase family. Homodimer. Zn(2+) serves as cofactor.

The protein resides in the cytoplasm. The enzyme catalyses tRNA(Thr) + L-threonine + ATP = L-threonyl-tRNA(Thr) + AMP + diphosphate + H(+). Catalyzes the attachment of threonine to tRNA(Thr) in a two-step reaction: L-threonine is first activated by ATP to form Thr-AMP and then transferred to the acceptor end of tRNA(Thr). Also edits incorrectly charged L-seryl-tRNA(Thr). The protein is Threonine--tRNA ligase of Paramagnetospirillum magneticum (strain ATCC 700264 / AMB-1) (Magnetospirillum magneticum).